Reading from the N-terminus, the 368-residue chain is Xaa-Pro dipeptidase (368 aa).

Mn(2+) is bound by residues Asp223, Asp234, His298, Glu327, and Glu341.

This sequence belongs to the peptidase M24B family. Mn(2+) is required as a cofactor.

It is found in the cytoplasm. It carries out the reaction Xaa-L-Pro dipeptide + H2O = an L-alpha-amino acid + L-proline. The polypeptide is Xaa-Pro dipeptidase (pepQ) (Lactobacillus helveticus (Lactobacillus suntoryeus)).